A 421-amino-acid polypeptide reads, in one-letter code: Probable sugar-binding periplasmic protein (421 aa).

A signal peptide spans 1–27 (MHKLLKLAAMGTAACALLAGMAPVANA).

Belongs to the bacterial solute-binding protein 1 family.

It is found in the periplasm. Its function is as follows. Part of a binding-protein-dependent transport system for a sugar. The polypeptide is Probable sugar-binding periplasmic protein (Brucella melitensis biotype 1 (strain ATCC 23456 / CCUG 17765 / NCTC 10094 / 16M)).